We begin with the raw amino-acid sequence, 109 residues long: UPF0060 membrane protein PCC8801_1733 (109 aa).

Helical transmembrane passes span 7 to 27 (LLYF…VWLW), 36 to 56 (YALL…LQTA), 58 to 78 (FGRV…LWGW), and 87 to 107 (SYDW…MYAP).

This sequence belongs to the UPF0060 family.

Its subcellular location is the cell inner membrane. The sequence is that of UPF0060 membrane protein PCC8801_1733 from Rippkaea orientalis (strain PCC 8801 / RF-1) (Cyanothece sp. (strain PCC 8801)).